A 506-amino-acid chain; its full sequence is COP9 signalosome complex subunit 2 (506 aa).

Positions 252–420 (SEENWEEAQS…GTVVVESASD (169 aa)) constitute a PCI domain. The segment covering 482–491 (SGHRFRRGGK) has biased composition (basic residues). The tract at residues 482-506 (SGHRFRRGGKGSKAGGGLGMKTGLF) is disordered. The span at 492–506 (GSKAGGGLGMKTGLF) shows a compositional bias: gly residues.

It belongs to the CSN2 family. As to quaternary structure, component of the COP9 signalosome (CSN) complex.

It localises to the cytoplasm. The protein localises to the nucleus. Its function is as follows. Component of the COP9 signalosome (CSN) complex that acts as an regulator of the ubiquitin (Ubl) conjugation pathway by mediating the deneddylation of the cullin subunit of SCF-type E3 ubiquitin-protein ligase complexes. The CSN complex seems to link protein degradation to sexual development. Required for fruit body formation. This is COP9 signalosome complex subunit 2 (csnB) from Emericella nidulans (strain FGSC A4 / ATCC 38163 / CBS 112.46 / NRRL 194 / M139) (Aspergillus nidulans).